The sequence spans 183 residues: Neuroblastoma suppressor of tumorigenicity 1 (183 aa).

The N-terminal stretch at 1–19 (MVMCVRAVLVCVLLELSRA) is a signal peptide. 5 disulfide bridges follow: Cys-38–Cys-88, Cys-52–Cys-102, Cys-62–Cys-121, Cys-66–Cys-123, and Cys-85–Cys-126. The region spanning 38 to 127 (CEAKNITQIV…ILHCSCQSCS (90 aa)) is the CTCK domain. The disordered stretch occupies residues 145–170 (AQDLPSLPDATHTHPQHAHMQADQRD).

The protein belongs to the DAN family.

It is found in the secreted. In terms of biological role, may act as a tumor suppressor. This chain is Neuroblastoma suppressor of tumorigenicity 1 (nbl1), found in Danio rerio (Zebrafish).